A 314-amino-acid polypeptide reads, in one-letter code: Probable cell division protein WhiA (314 aa).

Residues 282 to 314 (SLKELGELCRPPVSKSGAAHRMRQLMALAESLE) constitute a DNA-binding region (H-T-H motif).

This sequence belongs to the WhiA family.

Functionally, involved in cell division and chromosome segregation. The sequence is that of Probable cell division protein WhiA from Symbiobacterium thermophilum (strain DSM 24528 / JCM 14929 / IAM 14863 / T).